Reading from the N-terminus, the 101-residue chain is MSIMKPTTRFFRFNSLELAVSPFQRIYGQLRFLRKQPKPFLVKLLNNEVSKLGRQGDVVSVTRGYYRNTLFPKKQAIAVDALKSMKAHLLQGSEFSTKTKE.

The N-terminal 32 residues, Met-1–Phe-32, are a transit peptide targeting the mitochondrion.

Belongs to the bacterial ribosomal protein bL9 family. As to quaternary structure, component of the mitochondrial large ribosomal subunit (mt-LSU). Mature yeast 74S mitochondrial ribosomes consist of a small (37S) and a large (54S) subunit. The 37S small subunit contains a 15S ribosomal RNA (15S mt-rRNA) and at least 32 different proteins. The 54S large subunit contains a 21S rRNA (21S mt-rRNA) and at least 45 different proteins.

It localises to the mitochondrion. Functionally, component of the mitochondrial ribosome (mitoribosome), a dedicated translation machinery responsible for the synthesis of mitochondrial genome-encoded proteins, including at least some of the essential transmembrane subunits of the mitochondrial respiratory chain. The mitoribosomes are attached to the mitochondrial inner membrane and translation products are cotranslationally integrated into the membrane. The protein is Large ribosomal subunit protein bL9m of Schizosaccharomyces pombe (strain 972 / ATCC 24843) (Fission yeast).